Consider the following 702-residue polypeptide: Ribosomal RNA large subunit methyltransferase K/L (702 aa).

Residues 43 to 154 (LVYQSLMWSR…KETASIALDL (112 aa)) enclose the THUMP domain.

The protein belongs to the methyltransferase superfamily. RlmKL family.

It is found in the cytoplasm. It catalyses the reaction guanosine(2445) in 23S rRNA + S-adenosyl-L-methionine = N(2)-methylguanosine(2445) in 23S rRNA + S-adenosyl-L-homocysteine + H(+). The enzyme catalyses guanosine(2069) in 23S rRNA + S-adenosyl-L-methionine = N(2)-methylguanosine(2069) in 23S rRNA + S-adenosyl-L-homocysteine + H(+). Functionally, specifically methylates the guanine in position 2445 (m2G2445) and the guanine in position 2069 (m7G2069) of 23S rRNA. In Escherichia coli O139:H28 (strain E24377A / ETEC), this protein is Ribosomal RNA large subunit methyltransferase K/L.